Reading from the N-terminus, the 459-residue chain is Periodic tryptophan protein 1 homolog (459 aa).

Positions 44-84 are disordered; sequence GDTQQELDEESDDDAEEGENAEEDQNDMDVDDHADANSENR. Residues 48–73 are compositionally biased toward acidic residues; the sequence is QELDEESDDDAEEGENAEEDQNDMDV. Over residues 74-84 the composition is skewed to basic and acidic residues; that stretch reads DDHADANSENR. WD repeat units lie at residues 168–214, 232–272, 275–315, 321–361, and 365–405; these read LLPS…AIEP, GHKD…PHTT, AFGK…GVNS, KVDG…QLLW, and AHNE…AKHV. Phosphoserine is present on S385.

This sequence belongs to the WD repeat PWP1 family. In terms of assembly, interacts with Mybbp1A. In terms of processing, phosphorylated in response to nutrient-activated TORC1 signaling. Detected in the germline of adult testis and ovary (at protein level). Detected in ovary somatic cells, in zfh1-positive cyst cells in the testis and absent in differentiated cyst cells (at protein level).

Its subcellular location is the nucleus. The protein resides in the nucleolus. The protein localises to the chromosome. It is found in the nucleoplasm. Its function is as follows. Chromatin-associated factor that regulates transcription. Regulates Pol I-mediated rRNA biogenesis and, probably, Pol III-mediated transcription. Regulates the localization to the nucleolus of Cdk7, a regulator of the Pol I-elongation factor TFIIH. Acts as a regulator of cell proliferation and tissue growth as part of the TORC1 and Myc signaling pathway in response to nutrients. Required in males for both germline stem cell (GSC) maintenance and early stages of germ cell differentiation of germ cell cysts. Not required for female germline stem cell (GSC) maintenance, but necessary to regulate germ cell differentiation and egg chamber development. In female somatic cells, required for follicle stem cell survival and maintenance. This is Periodic tryptophan protein 1 homolog from Drosophila melanogaster (Fruit fly).